A 103-amino-acid polypeptide reads, in one-letter code: Small ribosomal subunit protein uS10 (103 aa).

The protein belongs to the universal ribosomal protein uS10 family. Part of the 30S ribosomal subunit.

In terms of biological role, involved in the binding of tRNA to the ribosomes. The polypeptide is Small ribosomal subunit protein uS10 (Xylella fastidiosa (strain 9a5c)).